The chain runs to 117 residues: Large ribosomal subunit protein bL20c (117 aa).

It belongs to the bacterial ribosomal protein bL20 family.

It localises to the plastid. Its subcellular location is the chloroplast. Functionally, binds directly to 23S ribosomal RNA and is necessary for the in vitro assembly process of the 50S ribosomal subunit. It is not involved in the protein synthesizing functions of that subunit. This Populus alba (White poplar) protein is Large ribosomal subunit protein bL20c.